The following is a 274-amino-acid chain: Glucosamine-6-phosphate deaminase (274 aa).

The Proton acceptor; for enolization step role is filled by Asp72. Asp141 (for ring-opening step) is an active-site residue. Residue His143 is the Proton acceptor; for ring-opening step of the active site. Glu148 functions as the For ring-opening step in the catalytic mechanism.

This sequence belongs to the glucosamine/galactosamine-6-phosphate isomerase family. Homohexamer.

It localises to the cytoplasm. It catalyses the reaction alpha-D-glucosamine 6-phosphate + H2O = beta-D-fructose 6-phosphate + NH4(+). The protein operates within nucleotide-sugar biosynthesis; UDP-N-acetyl-alpha-D-glucosamine biosynthesis; alpha-D-glucosamine 6-phosphate from D-fructose 6-phosphate: step 1/1. Functionally, catalyzes the reversible conversion of alpha-D-glucosamine 6-phosphate (GlcN-6P) into beta-D-fructose 6-phosphate (Fru-6P) and ammonium ion, a regulatory reaction step in de novo uridine diphosphate-N-acetyl-alpha-D-glucosamine (UDP-GlcNAc) biosynthesis via hexosamine pathway. This chain is Glucosamine-6-phosphate deaminase, found in Drosophila pseudoobscura pseudoobscura (Fruit fly).